Here is a 252-residue protein sequence, read N- to C-terminus: MNKFEDIRGVAFDLDGTLVDSALGLAAAVDMALYALKLPIAGEERVITWIGNGADVLMERALTWARQERATLRKTMGKPPVDDDIPAEEQVRILRKLFDRYYGEVAEEGTFLFPHVADTLGALQAKGLPLGLVTNKPTPFVAPLLEALDIAKYFSVVIGGDDVQNKKPHPDPLLLVAERMGIAPQQMLFVGDSRNDIQAAKAAGCPSVGLTYGYNYGEAIDLSQPDVIYQSINDLLPALGLPHSENQESKND.

Asp-13 (nucleophile) is an active-site residue. Asp-13, Asp-15, and Asp-192 together coordinate Mg(2+).

Belongs to the HAD-like hydrolase superfamily. CbbY/CbbZ/Gph/YieH family. Monomer. The cofactor is Mg(2+). Chloride serves as cofactor.

The enzyme catalyses 2-phosphoglycolate + H2O = glycolate + phosphate. The protein operates within organic acid metabolism; glycolate biosynthesis; glycolate from 2-phosphoglycolate: step 1/1. In terms of biological role, specifically catalyzes the dephosphorylation of 2-phosphoglycolate. Is involved in the dissimilation of the intracellular 2-phosphoglycolate formed during the DNA repair of 3'-phosphoglycolate ends, a major class of DNA lesions induced by oxidative stress. This Shigella dysenteriae serotype 1 (strain Sd197) protein is Phosphoglycolate phosphatase.